Consider the following 274-residue polypeptide: Envelope glycoprotein L (274 aa).

The N-terminal stretch at 1-21 (MMPLLLLILLSTRNLLGAAQS) is a signal peptide. The region spanning 51–251 (VEHKCREALA…RSYRDRFPAV (201 aa)) is the gL betaherpesvirus-type domain. Cysteine 156 and cysteine 161 are joined by a disulfide.

It belongs to the herpesviridae glycoprotein L (gL) family. Betaherpesvirinae gL subfamily. In terms of assembly, interacts with glycoprotein H (gH); this interaction is necessary for the correct processing and cell surface expression of gH.

The protein localises to the virion membrane. It is found in the host cell membrane. It localises to the host Golgi apparatus. The protein resides in the host trans-Golgi network. The heterodimer glycoprotein H-glycoprotein L is required for the fusion of viral and plasma membranes leading to virus entry into the host cell. Acts as a functional inhibitor of gH and maintains gH in an inhibited form. Upon binding to host integrins, gL dissociates from gH leading to activation of the viral fusion glycoproteins gB and gH. This chain is Envelope glycoprotein L, found in Murid herpesvirus 1 (strain Smith) (MuHV-1).